Reading from the N-terminus, the 620-residue chain is UvrABC system protein C (620 aa).

The GIY-YIG domain occupies 13 to 92 (DKPGVYIMKN…IKKYSPRYNI (80 aa)). One can recognise a UVR domain in the interval 204–239 (TSIIKKLKLEMEKAAEELEFEKAAKIRDRILAIELI).

This sequence belongs to the UvrC family. In terms of assembly, interacts with UvrB in an incision complex.

Its subcellular location is the cytoplasm. Its function is as follows. The UvrABC repair system catalyzes the recognition and processing of DNA lesions. UvrC both incises the 5' and 3' sides of the lesion. The N-terminal half is responsible for the 3' incision and the C-terminal half is responsible for the 5' incision. In Clostridium perfringens (strain 13 / Type A), this protein is UvrABC system protein C.